A 449-amino-acid chain; its full sequence is MNHFAVILAAGKGTRMKSKLYKVLHPVAGKPMVQHVVDQLTTLGVTRQVVIVGHGAESVKEVLGTSVEYALQSEQLGTGHAVQMAEPVLGQEKGSTLVVCGDTPLLTSETLQSLLQHHAETGAKVTVLTAHADDATGYGRIVRGEDGNVSKIVEHKDANAEELLIKEINTGTYVFDNEMLFEALKQVKNDNVQGEYYLPDVIEIAKADGETIAAYAASTFEETIGVNDRVALAQAETSMRKRTNEHWMRQGVTFIDPASTYIGPDVVIGSDTVLYPGTQLLGNTTIGSECIIGPNSDIRNSEVADQAVVRQSVVTDSKIGPAAQVGPFAHLRQQAVLGANTRIGNFVEVKKSTFGEGSKSAHLSYVGDATIGTNVNLGCGSITVNYDGTNKFQTVIEDDAFIGCNVNLIAPVTVGKNALVAAGSTVTDDVPENGLAIARERQTTKPDYR.

Residues 1–229 form a pyrophosphorylase region; the sequence is MNHFAVILAA…FEETIGVNDR (229 aa). Residues 8-11, Lys22, Gln72, and 77-78 each bind UDP-N-acetyl-alpha-D-glucosamine; these read LAAG and GT. Asp102 contacts Mg(2+). UDP-N-acetyl-alpha-D-glucosamine is bound by residues Gly139, Glu154, Asn169, and Asn227. Asn227 contributes to the Mg(2+) binding site. A linker region spans residues 230 to 250; that stretch reads VALAQAETSMRKRTNEHWMRQ. An N-acetyltransferase region spans residues 251–449; it reads GVTFIDPAST…ERQTTKPDYR (199 aa). UDP-N-acetyl-alpha-D-glucosamine contacts are provided by Arg332 and Lys350. His362 functions as the Proton acceptor in the catalytic mechanism. Tyr365 and Asn376 together coordinate UDP-N-acetyl-alpha-D-glucosamine. Acetyl-CoA contacts are provided by residues 385–386, Ala422, and Arg439; that span reads NY.

The protein in the N-terminal section; belongs to the N-acetylglucosamine-1-phosphate uridyltransferase family. It in the C-terminal section; belongs to the transferase hexapeptide repeat family. In terms of assembly, homotrimer. Mg(2+) is required as a cofactor.

The protein resides in the cytoplasm. The enzyme catalyses alpha-D-glucosamine 1-phosphate + acetyl-CoA = N-acetyl-alpha-D-glucosamine 1-phosphate + CoA + H(+). The catalysed reaction is N-acetyl-alpha-D-glucosamine 1-phosphate + UTP + H(+) = UDP-N-acetyl-alpha-D-glucosamine + diphosphate. It functions in the pathway nucleotide-sugar biosynthesis; UDP-N-acetyl-alpha-D-glucosamine biosynthesis; N-acetyl-alpha-D-glucosamine 1-phosphate from alpha-D-glucosamine 6-phosphate (route II): step 2/2. The protein operates within nucleotide-sugar biosynthesis; UDP-N-acetyl-alpha-D-glucosamine biosynthesis; UDP-N-acetyl-alpha-D-glucosamine from N-acetyl-alpha-D-glucosamine 1-phosphate: step 1/1. It participates in bacterial outer membrane biogenesis; LPS lipid A biosynthesis. Its function is as follows. Catalyzes the last two sequential reactions in the de novo biosynthetic pathway for UDP-N-acetylglucosamine (UDP-GlcNAc). The C-terminal domain catalyzes the transfer of acetyl group from acetyl coenzyme A to glucosamine-1-phosphate (GlcN-1-P) to produce N-acetylglucosamine-1-phosphate (GlcNAc-1-P), which is converted into UDP-GlcNAc by the transfer of uridine 5-monophosphate (from uridine 5-triphosphate), a reaction catalyzed by the N-terminal domain. The chain is Bifunctional protein GlmU from Exiguobacterium sibiricum (strain DSM 17290 / CCUG 55495 / CIP 109462 / JCM 13490 / 255-15).